The chain runs to 109 residues: MAQDSKILEELYTVIASRKGTDPDKSYTAKLFARGRGKIAQKFGEEAVETVVAALSEGKDELVGESADTLYHLLVLWADCGVEPAKVWAELARRTGTSGIDEKKSRAKK.

This sequence belongs to the PRA-PH family.

It localises to the cytoplasm. The enzyme catalyses 1-(5-phospho-beta-D-ribosyl)-ATP + H2O = 1-(5-phospho-beta-D-ribosyl)-5'-AMP + diphosphate + H(+). Its pathway is amino-acid biosynthesis; L-histidine biosynthesis; L-histidine from 5-phospho-alpha-D-ribose 1-diphosphate: step 2/9. The chain is Phosphoribosyl-ATP pyrophosphatase from Paramagnetospirillum magneticum (strain ATCC 700264 / AMB-1) (Magnetospirillum magneticum).